The following is a 619-amino-acid chain: DBH-like monooxygenase protein 2 (619 aa).

An N-terminal signal peptide occupies residues 1–21; it reads MACVLLFRLFLLLVLAAFSQG. Residues 22 to 594 are Extracellular-facing; that stretch reads KRLGPTSPLR…LSGSNTATLR (573 aa). The region spanning 40-156 is the DOMON domain; sequence RAVFLRWDFD…DTMRVLAAYG (117 aa). Residue tyrosine 209 is part of the active site. 2 disulfides stabilise this stretch: cysteine 211–cysteine 261 and cysteine 248–cysteine 271. The Cu cation site is built by histidine 241 and histidine 242. N-linked (GlcNAc...) asparagine glycosylation is present at asparagine 250. Cu cation-binding residues include histidine 309, histidine 390, and histidine 392. 2 cysteine pairs are disulfide-bonded: cysteine 366-cysteine 481 and cysteine 444-cysteine 466. Residue histidine 390 is part of the active site. A glycan (N-linked (GlcNAc...) asparagine) is linked at asparagine 405. Methionine 465 is a Cu cation binding site. Asparagine 477 carries N-linked (GlcNAc...) asparagine glycosylation. A helical transmembrane segment spans residues 595 to 615; sequence PLPMIAVLFLQGSLSCLLAML. At 616–619 the chain is on the cytoplasmic side; that stretch reads QTGV.

It belongs to the copper type II ascorbate-dependent monooxygenase family. Cu(2+) is required as a cofactor. As to expression, expressed at low levels in thymus and testis.

The protein localises to the membrane. This chain is DBH-like monooxygenase protein 2 (Moxd2), found in Mus musculus (Mouse).